We begin with the raw amino-acid sequence, 497 residues long: Cytochrome P450 71A18 (497 aa).

A helical membrane pass occupies residues 4 to 24; that stretch reads TLMVSLCLTTLLTLLLLKKFL. Cys-439 is a binding site for heme.

This sequence belongs to the cytochrome P450 family. Heme serves as cofactor.

It is found in the membrane. The protein is Cytochrome P450 71A18 (CYP71A18) of Arabidopsis thaliana (Mouse-ear cress).